Reading from the N-terminus, the 599-residue chain is MGRLEVLFLGLTCCLAAACAAKLGAVYTEGGFVEGVNKKLSLLGGDSVDIFKGIPFATAKTLENPQRHPGWQGTLKATNFKKRCLQATITQDNTYGQEDCLYLNIWVPQGRKQVSHNLPVMVWIYGGAFLMGSGQGANFLKNYLYDGEEIATRGNVIVVTFNYRVGPLGFLSTGDANLPGNFGLRDQHMAIAWVKRNIAAFGGDPDNITIFGESAGAASVSLQTLSPYNKGLIRRAISQSGMALSPWAIQKNPLFWAKTIAKKVGCPTEDTGKMAACLKITDPRALTLAYKLPVKKQEYPVVHYLAFIPVIDGDFIPDDPINLYNNTADIDYIAGINNMDGHLFATIDVPAVDKTKQTVTEEDFYRLVSGHTVAKGLKGAQATFDIYTESWAQDPSQENMKKTVVAFETDVLFLIPTEIALAQHKAHAKSAKTYSYLFSHPSRMPIYPKWMGADHADDLQYVFGKPFATPLGYRPQDRAVSKAMIAYWTNFARSGDPNMGNSPVPTHWYPYTLENGNYLDITKTITSASMKEHLREKFLKFWAVTFEVLPTVTGDQDTLTPPEDDSEVAPDPPSDDSQVVPVPPTDDSVEAQMPATIGF.

Residues 1–20 (MGRLEVLFLGLTCCLAAACA) form the signal peptide. Residues Cys-84 and Cys-100 are joined by a disulfide bond. Asn-207 carries an N-linked (GlcNAc...) asparagine glycan. Ser-214 (acyl-ester intermediate) is an active-site residue. Cys-266 and Cys-277 are disulfide-bonded. Asn-325 is a glycosylation site (N-linked (GlcNAc...) asparagine). Catalysis depends on charge relay system residues Asp-340 and His-455. The disordered stretch occupies residues 553–599 (TGDQDTLTPPEDDSEVAPDPPSDDSQVVPVPPTDDSVEAQMPATIGF). Tandem repeats lie at residues 559–569 (LTPPEDDSEVA), 570–580 (PDPPSDDSQVV), and 581–588 (PVPPTDDS). Residues 559–588 (LTPPEDDSEVAPDPPSDDSQVVPVPPTDDS) form a 4 X 11 AA tandem repeats, O-glycosylated region region.

The protein belongs to the type-B carboxylesterase/lipase family. As to quaternary structure, interacts with CLC. In terms of tissue distribution, EXpressed by eosinophils.

Its subcellular location is the secreted. The catalysed reaction is a triacylglycerol + H2O = a diacylglycerol + a fatty acid + H(+). The enzyme catalyses 1,2,3-tri-(9Z-octadecenoyl)-glycerol + H2O = di-(9Z)-octadecenoylglycerol + (9Z)-octadecenoate + H(+). It catalyses the reaction 1,2,3-trioctanoylglycerol + H2O = dioctanoylglycerol + octanoate + H(+). It carries out the reaction a sterol ester + H2O = a sterol + a fatty acid + H(+). The catalysed reaction is an acetyl ester + H2O = an aliphatic alcohol + acetate + H(+). The enzyme catalyses a butanoate ester + H2O = an aliphatic alcohol + butanoate + H(+). It catalyses the reaction 9-hexadecanoyloxy-octadecanoate + H2O = 9-hydroxy-octadecanoate + hexadecanoate + H(+). It carries out the reaction 9-(9Z-octadecenoyloxy)-octadecanoate + H2O = 9-hydroxy-octadecanoate + (9Z)-octadecenoate + H(+). The catalysed reaction is cholesteryl (9Z-octadecenoate) + H2O = cholesterol + (9Z)-octadecenoate + H(+). The enzyme catalyses 1-hexadecanoyl-sn-glycero-3-phosphocholine + H2O = sn-glycerol 3-phosphocholine + hexadecanoate + H(+). It catalyses the reaction 12-hexadecanoyloxy-octadecanoate + H2O = 12-hydroxyoctadecanoate + hexadecanoate + H(+). It carries out the reaction 12-(9Z-octadecenoyloxy)-octadecanoate + H2O = 12-hydroxyoctadecanoate + (9Z)-octadecenoate + H(+). The catalysed reaction is 13-(9Z-octadecenoyloxy)-octadecanoate + H2O = 13-hydroxy-octadecanoate + (9Z)-octadecenoate + H(+). The enzyme catalyses 9-(9Z-hexadecenoyloxy)-octadecanoate + H2O = (9Z)-hexadecenoate + 9-hydroxy-octadecanoate + H(+). It catalyses the reaction 12-(9Z-hexadecenoyloxy)-octadecanoate + H2O = 12-hydroxyoctadecanoate + (9Z)-hexadecenoate + H(+). It carries out the reaction 13-(9Z-hexadecenoyloxy)-octadecanoate + H2O = 13-hydroxy-octadecanoate + (9Z)-hexadecenoate + H(+). The catalysed reaction is 12-octadecanoyloxy-octadecanoate + H2O = 12-hydroxyoctadecanoate + octadecanoate + H(+). The enzyme catalyses 13-octadecanoyloxy-octadecanoate + H2O = 13-hydroxy-octadecanoate + octadecanoate + H(+). It catalyses the reaction 5-(9Z-hexadecenoyloxy)-octadecanoate + H2O = 5-hydroxy-octadecanoate + (9Z)-hexadecenoate + H(+). It carries out the reaction 9-octadecanoyloxy-octadecanoate + H2O = 9-hydroxy-octadecanoate + octadecanoate + H(+). Its activity is regulated as follows. Activated by bile salts such as sodium taurocholate. In terms of biological role, catalyzes the hydrolysis of a wide range of substrates including cholesteryl esters, phospholipids, lysophospholipids, di- and tri-acylglycerols, and fatty acid esters of hydroxy fatty acids (FAHFAs). Preferentially hydrolyzes FAHFAs with the ester bond further away from the carboxylate. Unsaturated FAHFAs are hydrolyzed more quickly than saturated FAHFAs. Has an essential role in the complete digestion of dietary lipids and their intestinal absorption, along with the absorption of fat-soluble vitamins. In Mus musculus (Mouse), this protein is Bile salt-activated lipase (Cel).